The chain runs to 4367 residues: Guanylate cyclase (4367 aa).

The segment covering 1–10 (MKKTRTTAAE) has biased composition (polar residues). The interval 1-70 (MKKTRTTAAE…MSFLQGKHQQ (70 aa)) is disordered. At 1 to 150 (MKKTRTTAAE…FKNLWEQFHR (150 aa)) the chain is on the cytoplasmic side. The span at 19–33 (PHDEHRGRGREHGGA) shows a compositional bias: basic and acidic residues. A compositionally biased stretch (polar residues) spans 54-63 (HQATQKQMSF). A helical transmembrane segment spans residues 151-171 (VINWWFLVMAIIQAIPQLHYN). Residues 172 to 174 (PNH) are Extracellular-facing. A helical transmembrane segment spans residues 175-195 (AWSTALPFAIVLVFGMLKDAF). The Cytoplasmic portion of the chain corresponds to 196–373 (TDLGRRERDR…GFKRPHIEKD (178 aa)). The chain crosses the membrane as a helical span at residues 374 to 394 (INTYLFISFFIVFLTILISVM). Residues 395–452 (SKWSVQERDSGDTGVTDAGASSGSGSSSGETSQTYGSSVEFMLGSRDLLQNPWMSILR) are Extracellular-facing. The interval 402 to 426 (RDSGDTGVTDAGASSGSGSSSGETS) is disordered. Residues 407-426 (TGVTDAGASSGSGSSSGETS) are compositionally biased toward low complexity. Residues 453–473 (FLAVYAPVLPLSLPLILDVVY) traverse the membrane as a helical segment. The Cytoplasmic segment spans residues 474 to 2258 (LLQSVLIEGD…VHGRLSLMRV (1785 aa)). 10 disordered regions span residues 486–535 (IRGG…QQPL), 550–699 (SEKF…ISGR), 831–918 (ETSA…ASSL), 932–966 (RLEETGSQKEEDSRSDRVSLSPSEGRVSGSRPQLA), 980–1047 (VGIQ…GELS), 1079–1164 (GMSF…MPAV), 1344–1593 (PSGT…SLKS), 1607–1652 (FRRG…TGTG), 1773–1861 (GGRG…GLRS), and 1881–1946 (DKQH…PQHL). The span at 523-535 (AHSSQNASLQQPL) shows a compositional bias: polar residues. Basic and acidic residues-rich tracts occupy residues 605-628 (ETLRADAEGAQERDREAEGNREQL) and 670-679 (RRSDDRDRKS). A compositionally biased stretch (low complexity) spans 850-863 (SAASSRSQSAPASA). Positions 880 to 892 (QTLTNQQTGQQSP) are enriched in polar residues. A compositionally biased stretch (low complexity) spans 906 to 917 (ASPGAADSPASS). Residues 932 to 948 (RLEETGSQKEEDSRSDR) show a composition bias toward basic and acidic residues. Over residues 983–996 (QSQHSSQSLLSSRQ) the composition is skewed to low complexity. Positions 1025 to 1047 (DRMYSRDYHRESRSSSPRDGELS) are enriched in basic and acidic residues. 2 stretches are compositionally biased toward polar residues: residues 1084-1094 (SRPSSQFTFSS) and 1117-1130 (RSLTPPSERGTASP). Over residues 1344–1357 (PSGTSASSGAPSGP) the composition is skewed to low complexity. 2 stretches are compositionally biased toward gly residues: residues 1370–1381 (QGQGHGSLGAPG) and 1389–1400 (CLGGAGGSGARG). A compositionally biased stretch (pro residues) spans 1443-1454 (VPSPRPLSPAGP). Residues 1527–1542 (SFKEKHEEFAFSKDED) show a composition bias toward basic and acidic residues. A compositionally biased stretch (acidic residues) spans 1543-1567 (TATVDQDDTQSATDEEHDVEGEEEE). Over residues 1583 to 1593 (SASASLMSLKS) the composition is skewed to low complexity. Composition is skewed to polar residues over residues 1628-1652 (GRSSSVERAQQPPTHGGFSTVTGTG), 1779-1791 (VSLSRLQSNSSAK), and 1843-1852 (VNPSGQTYSQ). Basic and acidic residues predominate over residues 1881-1922 (DKQHQRGHGPEGDEGSHELEGHDAHTGDSHGGHHRDQAEPRA). A compositionally biased stretch (polar residues) spans 1933 to 1942 (RLPQKTQNRL). The helical transmembrane segment at 2259–2279 (STVILWSFFKSLCIGLPTFLF) threads the bilayer. Over 2280–2289 (QPQAFWSAVE) the chain is Extracellular. Residues 2290–2310 (VYDPLLLMIVDFFWTTLPGII) form a helical membrane-spanning segment. Topologically, residues 2311–2343 (HGYSDQDLPTHLLPSVPVLYTPGRRRLYFNGFR) are cytoplasmic. Residues 2344–2364 (FILWTVEGIIYSFLIFYLLQA) form a helical membrane-spanning segment. At 2365-2376 (TWMDGNTFHDGQ) the chain is on the extracellular side. The helical transmembrane segment at 2377 to 2397 (VLGFHSYGILLLFGSLLQSNV) threads the bilayer. Topologically, residues 2398 to 2408 (RIILETSLWTP) are cytoplasmic. A helical transmembrane segment spans residues 2409–2429 (TFLFTTIVLCTIMFFPTVLLY). Residues 2430-2444 (SVTGWPRRYMELAGR) are Extracellular-facing. The chain crosses the membrane as a helical span at residues 2445–2465 (VVFAWPMLYFLIPLWVSIGIL). The Cytoplasmic segment spans residues 2466-2724 (VQLLLQVFTS…LKRLVPWYRV (259 aa)). The helical transmembrane segment at 2725 to 2745 (IFMLIALYQLLSFLTEYFIDI) threads the bilayer. Over 2746–2762 (HWNPGETEMEPWMCVPT) the chain is Extracellular. Residues 2763 to 2783 (LVVEIGFAAVVVCTFYDFIFL) traverse the membrane as a helical segment. The Cytoplasmic segment spans residues 2784-2785 (DH). The chain crosses the membrane as a helical span at residues 2786-2806 (FSLILNSIVFLMVSSSIVFYT). Residues 2807–2823 (ASHVDGTLTSVLFPVFT) are Extracellular-facing. Residues 2824–2844 (FVILRISFLQAVVWNILFLIV) form a helical membrane-spanning segment. The Cytoplasmic portion of the chain corresponds to 2845 to 2858 (TVARFMLDKKYLPP). Residues 2859-2879 (LNFVHYIPLFIGIDVFVAFVG) traverse the membrane as a helical segment. Residues 2880–2903 (YRLEYNQRKSFLLDYSVDASRRKQ) lie on the Extracellular side of the membrane. A helical transmembrane segment spans residues 2904 to 2924 (REILNTMLPSFVVDQMINSEL). Over 2925–3693 (NEEGIPTSLK…RTHFYNNKSN (769 aa)) the chain is Cytoplasmic. Positions 2942 to 3150 (SVIFCDVYEF…DTVNTASRMK (209 aa)) constitute a Guanylate cyclase 1 domain. Disordered regions lie at residues 3214 to 3245 (DVISETGGQNGESRRSTASLPRQLETAGASSG), 3359 to 3402 (GQTE…SRFD), 3456 to 3475 (SGDEQAAGESSEADHDEVPL), 3485 to 3508 (QAREANEQESAKRSGGDAPPHTPT), 3523 to 3596 (GCAA…ETEK), and 3620 to 3653 (FRRRKPAAPSEAASPSSADTPMDSRVSPTSVDDE). The span at 3383–3402 (RADRRPAGRREDSRGDSRFD) shows a compositional bias: basic and acidic residues. Basic and acidic residues-rich tracts occupy residues 3485-3499 (QAREANEQESAKRSG), 3529-3541 (EEEKTAKEGRESE), and 3549-3569 (TESRDANGQRVSERDASDARE). The segment covering 3626-3637 (AAPSEAASPSSA) has biased composition (low complexity). The helical transmembrane segment at 3694–3714 (INTIEQALIIFLVTFCVQTLT) threads the bilayer. The Extracellular segment spans residues 3715–3736 (RLALPRFYVVCSHHTINLHVCT). Residues 3737–3757 (GLYWAVRATYTLAAFVLWMLF) traverse the membrane as a helical segment. Topologically, residues 3758–3772 (HYRNRKEVATCLELR) are cytoplasmic. Residues 3773 to 3793 (WMVFLLNLLFISASCVFALSN) form a helical membrane-spanning segment. Residues 3794 to 3895 (SWGVCGQQQE…GSDLVTANGR (102 aa)) are Extracellular-facing. The helical transmembrane segment at 3896 to 3916 (AYTYWLLSDTIELFFYIVILH) threads the bilayer. Residues 3917–3921 (HNTGL) are Cytoplasmic-facing. Residues 3922 to 3942 (LFQNCILVDVLLMTMSLTFII) traverse the membrane as a helical segment. Residues 3943-3950 (TTARETAS) are Extracellular-facing. The chain crosses the membrane as a helical span at residues 3951 to 3971 (TVSTIATFPCYVFFNLVSAYC). Over 3972–4367 (KEYIDRLTFY…GSTPGSALGS (396 aa)) the chain is Cytoplasmic. The Guanylate cyclase 2 domain occupies 4024-4159 (TFLFADICGF…MDVLTGNMME (136 aa)). Mg(2+)-binding residues include Asp4029, Ile4030, and Asp4073. Residues 4292 to 4367 (ASHGDSGPSD…GSTPGSALGS (76 aa)) form a disordered region. Residues 4333 to 4344 (DGLKQLRKEIER) are compositionally biased toward basic and acidic residues. Over residues 4356 to 4367 (DIGSTPGSALGS) the composition is skewed to polar residues.

It in the N-terminal section; belongs to the cation transport ATPase (P-type) (TC 3.A.3) family. Type IV subfamily. The protein in the C-terminal section; belongs to the adenylyl cyclase class-4/guanylyl cyclase family. As to quaternary structure, interacts with chaperone CDC50.1; the interaction regulates guanylate cyclase GC trafficking and sensing environmental changes. Interacts with UGO; the interaction regulates guanylate cyclase GC trafficking and catalytic activity. It depends on Mg(2+) as a cofactor. Mn(2+) serves as cofactor.

It is found in the cell membrane. It catalyses the reaction GTP = 3',5'-cyclic GMP + diphosphate. Functionally, catalyzes the synthesis of the second messenger cGMP from GTP. During the tachyzoite lytic growth cycle in host cells, detects and transduces environmental changes in potassium, phosphatidic acid and pH levels. By producing cGMP in response to these environmental changes, activates PKG and thereby regulates PKG-dependent microneme secretion which is essential for tachyzoite motility, host cell attachment invasion of and egress from host cells. May play a role in the fission of connected tachyzoites at their basal pole during egress. Does not display flippase activity towards phosphatidylserine, phosphatidic acid or phosphatidylcholine. The polypeptide is Guanylate cyclase (Toxoplasma gondii (strain ATCC 50853 / GT1)).